The primary structure comprises 207 residues: Flavin-dependent thymidylate synthase (207 aa).

The ThyX domain maps to 1-204 (MQITLLFHTP…KFIFEHCLHK (204 aa)). FAD is bound by residues Ser50 and 74–76 (RHR). Residues 71–74 (EVAR), 84–86 (STR), and Lys143 contribute to the dUMP site. The ThyX motif signature appears at 74 to 84 (RHRHTSPSVKS). FAD is bound by residues 159 to 161 (NAR) and Asn165. Arg170 contributes to the dUMP binding site. Arg170 serves as the catalytic Involved in ionization of N3 of dUMP, leading to its activation.

It belongs to the thymidylate synthase ThyX family. As to quaternary structure, homotetramer. FAD is required as a cofactor.

It catalyses the reaction dUMP + (6R)-5,10-methylene-5,6,7,8-tetrahydrofolate + NADPH + H(+) = dTMP + (6S)-5,6,7,8-tetrahydrofolate + NADP(+). It functions in the pathway pyrimidine metabolism; dTTP biosynthesis. Its function is as follows. Catalyzes the reductive methylation of 2'-deoxyuridine-5'-monophosphate (dUMP) to 2'-deoxythymidine-5'-monophosphate (dTMP) while utilizing 5,10-methylenetetrahydrofolate (mTHF) as the methyl donor, and NADPH and FADH(2) as the reductant. The protein is Flavin-dependent thymidylate synthase of Campylobacter jejuni subsp. jejuni serotype O:2 (strain ATCC 700819 / NCTC 11168).